A 465-amino-acid polypeptide reads, in one-letter code: Hepatocyte nuclear factor 6 (465 aa).

Disordered stretches follow at residues 15-84 (GVSH…GPLH) and 119-141 (SDKF…HQRL). Residues 123–140 (PHHHHHHHHHHHPHHHQR) show a composition bias toward basic residues. The CUT DNA-binding region spans 283–369 (GSNSGQMEEI…QRMSALRLAA (87 aa)). Positions 385-444 (PKKPRLVFTDVQRRTLHAIFKENKRPSKELQITISQQLGLELSTVSNFFMNARRRSLDKW) form a DNA-binding region, homeobox. Residues 442 to 465 (DKWQDEGSSNSGNSSSSSSTCTKA) are disordered. The span at 448–465 (GSSNSGNSSSSSSTCTKA) shows a compositional bias: low complexity.

This sequence belongs to the CUT homeobox family. Binds DNA as a monomer. Expressed in liver, brain, spleen and testis.

It is found in the nucleus. In terms of biological role, transcriptional activator. Binds the consensus sequence 5'-DHWATTGAYTWWD-3' on a variety of gene promoters such as those of HNF3B and TTR. Important for liver genes transcription. The affinity of HNF-6-alpha and HNF-6-beta for DNA differs depending on the target sequence. This Rattus norvegicus (Rat) protein is Hepatocyte nuclear factor 6 (Onecut1).